A 90-amino-acid polypeptide reads, in one-letter code: Small ribosomal subunit protein uS15c (90 aa).

Belongs to the universal ribosomal protein uS15 family. Part of the 30S ribosomal subunit.

The protein resides in the plastid. The protein localises to the chloroplast. The protein is Small ribosomal subunit protein uS15c (rps15-A) of Oryza nivara (Indian wild rice).